Consider the following 171-residue polypeptide: ATP synthase subunit b (171 aa).

Residues 26–48 (LINLAIIIGLLVYAGRGFLGNLL) traverse the membrane as a helical segment.

It belongs to the ATPase B chain family. In terms of assembly, F-type ATPases have 2 components, F(1) - the catalytic core - and F(0) - the membrane proton channel. F(1) has five subunits: alpha(3), beta(3), gamma(1), delta(1), epsilon(1). F(0) has four main subunits: a(1), b(1), b'(1) and c(10-14). The alpha and beta chains form an alternating ring which encloses part of the gamma chain. F(1) is attached to F(0) by a central stalk formed by the gamma and epsilon chains, while a peripheral stalk is formed by the delta, b and b' chains.

It is found in the cellular thylakoid membrane. Its function is as follows. F(1)F(0) ATP synthase produces ATP from ADP in the presence of a proton or sodium gradient. F-type ATPases consist of two structural domains, F(1) containing the extramembraneous catalytic core and F(0) containing the membrane proton channel, linked together by a central stalk and a peripheral stalk. During catalysis, ATP synthesis in the catalytic domain of F(1) is coupled via a rotary mechanism of the central stalk subunits to proton translocation. Functionally, component of the F(0) channel, it forms part of the peripheral stalk, linking F(1) to F(0). In Synechococcus elongatus (strain ATCC 33912 / PCC 7942 / FACHB-805) (Anacystis nidulans R2), this protein is ATP synthase subunit b.